We begin with the raw amino-acid sequence, 235 residues long: N-alpha-acetyltransferase 10 (235 aa).

M1 bears the N-acetylmethionine mark. The interaction with NAA15 stretch occupies residues 1–58; it reads MNIRNARPEDLMNMQHCNLLCLPENYQMKYYFYHGLSWPQLSYIAEDENGKIVGYVLA. The N-acetyltransferase domain maps to 1–152; the sequence is MNIRNARPED…DAYAMKRDLT (152 aa). At K136 the chain carries N6-acetyllysine; by autocatalysis. Positions 178 to 235 are disordered; that stretch reads NKVESKGNSPPSSGEACREEKGLAAEDSGGDSKDLSEVSETTESTDVKDSSEASDSAS. Phosphoserine is present on residues S182, S186, and S205. The segment covering 193 to 213 has biased composition (basic and acidic residues); it reads ACREEKGLAAEDSGGDSKDLS. S209 carries the phosphoserine; by IKKB modification. Phosphoserine is present on residues S213 and S216.

It belongs to the acetyltransferase family. ARD1 subfamily. As to quaternary structure, component of the N-terminal acetyltransferase A complex (also called the NatA complex) composed of NAA10 and NAA15. Within the complex interacts with NAA15. Component of the N-terminal acetyltransferase A (NatA)/HYPK complex at least composed of NAA10, NAA15 and HYPK, which has N-terminal acetyltransferase activity. In complex with NAA15, interacts with HYPK. Component of the N-terminal acetyltransferase E (NatE) complex at least composed of NAA10, NAA15 and NAA50. Within the complex interacts with NAA15; the interaction is required for binding to NAAT50. Interacts with NAAT50. The interaction of the NatA complex with NAA50 reduces the acetylation activity of the NatA complex. Component of the N-terminal acetyltransferase E (NatE)/HYPK complex at least composed of NAA10, NAA15, NAA50 and HYPK. In complex with NAA15, interacts with HYPK; the interaction with HYPK reduces the capacity of the NatA complex to interact with NAA50. Interacts with HIF1A (via its ODD domain); the interaction increases HIF1A protein stability during normoxia, an down-regulates it when induced by hypoxia. Interacts with the ribosome. Binds to MYLK. Interacts with NAA16. Interacts (via its C-terminal domain) with TSC2, leading to its acetylation. Interacts with IKBKB. Interacts with HSPA1A and HSPA1B leading to its acetylation. In terms of processing, cleaved by caspases during apoptosis. Phosphorylation by IKBKB/IKKB at Ser-209 promotes its proteasome-mediated degradation. Post-translationally, autoacetylated at Lys-136 which stimulates its catalytic activity. As to expression, ubiquitous.

The protein localises to the cytoplasm. Its subcellular location is the nucleus. The enzyme catalyses N-terminal glycyl-[protein] + acetyl-CoA = N-terminal N(alpha)-acetylglycyl-[protein] + CoA + H(+). The catalysed reaction is N-terminal L-alanyl-[protein] + acetyl-CoA = N-terminal N(alpha)-acetyl-L-alanyl-[protein] + CoA + H(+). It catalyses the reaction N-terminal L-seryl-[protein] + acetyl-CoA = N-terminal N(alpha)-acetyl-L-seryl-[protein] + CoA + H(+). It carries out the reaction N-terminal L-valyl-[protein] + acetyl-CoA = N-terminal N(alpha)-acetyl-L-valyl-[protein] + CoA + H(+). The enzyme catalyses N-terminal L-cysteinyl-[protein] + acetyl-CoA = N-terminal N(alpha)-acetyl-L-cysteinyl-[protein] + CoA + H(+). The catalysed reaction is N-terminal L-threonyl-[protein] + acetyl-CoA = N-terminal N(alpha)-acetyl-L-threonyl-[protein] + CoA + H(+). In terms of biological role, catalytic subunit of N-terminal acetyltransferase complexes which display alpha (N-terminal) acetyltransferase activity. Acetylates amino termini that are devoid of initiator methionine. The alpha (N-terminal) acetyltransferase activity may be important for vascular, hematopoietic and neuronal growth and development. Without NAA15, displays epsilon (internal) acetyltransferase activity towards HIF1A, thereby promoting its degradation. Represses MYLK kinase activity by acetylation, and thus represses tumor cell migration. Acetylates, and stabilizes TSC2, thereby repressing mTOR activity and suppressing cancer development. Acetylates HSPA1A and HSPA1B at 'Lys-77' which enhances its chaperone activity and leads to preferential binding to co-chaperone HOPX. Acetylates HIST1H4A. Acts as a negative regulator of sister chromatid cohesion during mitosis. The protein is N-alpha-acetyltransferase 10 (NAA10) of Homo sapiens (Human).